A 104-amino-acid chain; its full sequence is U20-lycotoxin-Ls1a (104 aa).

Positions 1-30 (MFSTSDQVSKMNSRILSALLILGIATCVIA) are cleaved as a signal peptide. One can recognise a WAP domain in the interval 31-76 (GGFCPKSRHPQCNLSYKINDCCAQSDCRVGSVCCVEGCGNVCRAES). 5 disulfide bridges follow: Cys-34/Cys-64, Cys-42/Cys-68, Cys-51/Cys-63, Cys-52/Cys-90, and Cys-57/Cys-72.

It belongs to the venom protein 11 family. 02 (wap-2) subfamily. Contains 5 disulfide bonds. In terms of tissue distribution, expressed by the venom gland.

Its subcellular location is the secreted. In terms of biological role, has antibacterial activity. The protein is U20-lycotoxin-Ls1a of Lycosa singoriensis (Wolf spider).